Reading from the N-terminus, the 696-residue chain is DNA ligase (696 aa).

Residues 36–40 (DAEYD), 85–86 (SL), and Glu123 contribute to the NAD(+) site. Lys125 (N6-AMP-lysine intermediate) is an active-site residue. NAD(+)-binding residues include Arg146, Glu181, Lys319, and Lys343. Zn(2+)-binding residues include Cys437, Cys440, Cys455, and Cys461. Residues 618–696 (PEGTSLAGKT…EDGLKALLGL (79 aa)) form the BRCT domain.

This sequence belongs to the NAD-dependent DNA ligase family. LigA subfamily. Mg(2+) serves as cofactor. Mn(2+) is required as a cofactor.

It catalyses the reaction NAD(+) + (deoxyribonucleotide)n-3'-hydroxyl + 5'-phospho-(deoxyribonucleotide)m = (deoxyribonucleotide)n+m + AMP + beta-nicotinamide D-nucleotide.. In terms of biological role, DNA ligase that catalyzes the formation of phosphodiester linkages between 5'-phosphoryl and 3'-hydroxyl groups in double-stranded DNA using NAD as a coenzyme and as the energy source for the reaction. It is essential for DNA replication and repair of damaged DNA. The sequence is that of DNA ligase from Bordetella bronchiseptica (strain ATCC BAA-588 / NCTC 13252 / RB50) (Alcaligenes bronchisepticus).